The chain runs to 360 residues: Molybdenum import ATP-binding protein ModC (360 aa).

An ABC transporter domain is found at 5 to 234 (VKLHLGYQDF…LDLPLALGDD (230 aa)). 32–39 (GHSGSGKT) lines the ATP pocket. A Mop domain is found at 295 to 360 (HSSILNRLPV…AQIKAVAVLA (66 aa)).

This sequence belongs to the ABC transporter superfamily. Molybdate importer (TC 3.A.1.8) family. The complex is composed of two ATP-binding proteins (ModC), two transmembrane proteins (ModB) and a solute-binding protein (ModA).

It is found in the cell inner membrane. The catalysed reaction is molybdate(out) + ATP + H2O = molybdate(in) + ADP + phosphate + H(+). In terms of biological role, part of the ABC transporter complex ModABC involved in molybdenum import. Responsible for energy coupling to the transport system. The sequence is that of Molybdenum import ATP-binding protein ModC from Pseudomonas fluorescens (strain ATCC BAA-477 / NRRL B-23932 / Pf-5).